Here is a 179-residue protein sequence, read N- to C-terminus: MAKLHDYYKSSVVAELTKQFSYTSVMQVPRIEKITLNMGVGEAINDKKLLENAASDMATISGQKPLITKARKSVAGFKIREGYPIGCKVTLRGERMWDFLERLINIALPRVRDFRGVSAKSFDGRGNYSMGVREQIIFPEIDFDKVDRVRGLDITITTSAGTDEEGRALLAAFNFPFRK.

This sequence belongs to the universal ribosomal protein uL5 family. As to quaternary structure, part of the 50S ribosomal subunit; part of the 5S rRNA/L5/L18/L25 subcomplex. Contacts the 5S rRNA and the P site tRNA. Forms a bridge to the 30S subunit in the 70S ribosome.

This is one of the proteins that bind and probably mediate the attachment of the 5S RNA into the large ribosomal subunit, where it forms part of the central protuberance. In the 70S ribosome it contacts protein S13 of the 30S subunit (bridge B1b), connecting the 2 subunits; this bridge is implicated in subunit movement. Contacts the P site tRNA; the 5S rRNA and some of its associated proteins might help stabilize positioning of ribosome-bound tRNAs. This Vibrio parahaemolyticus serotype O3:K6 (strain RIMD 2210633) protein is Large ribosomal subunit protein uL5.